Here is a 71-residue protein sequence, read N- to C-terminus: Small ribosomal subunit protein bS21 (71 aa).

Positions E48–R59 are enriched in basic residues. A disordered region spans residues E48–Y71. Basic and acidic residues predominate over residues N60–Y71.

The protein belongs to the bacterial ribosomal protein bS21 family.

The chain is Small ribosomal subunit protein bS21 from Glaesserella parasuis serovar 5 (strain SH0165) (Haemophilus parasuis).